The sequence spans 868 residues: DNA topoisomerase 1 (868 aa).

A Toprim domain is found at K3 to I148. 2 residues coordinate Mg(2+): E9 and D117. The Topo IA-type catalytic domain maps to N164–L581. The interaction with DNA stretch occupies residues S198 to Q203. Y325 functions as the O-(5'-phospho-DNA)-tyrosine intermediate in the catalytic mechanism. C4-type zinc fingers lie at residues C605–C636, C667–C694, and C716–C739.

It belongs to the type IA topoisomerase family. Monomer. Requires Mg(2+) as cofactor.

It catalyses the reaction ATP-independent breakage of single-stranded DNA, followed by passage and rejoining.. Its function is as follows. Releases the supercoiling and torsional tension of DNA, which is introduced during the DNA replication and transcription, by transiently cleaving and rejoining one strand of the DNA duplex. Introduces a single-strand break via transesterification at a target site in duplex DNA. The scissile phosphodiester is attacked by the catalytic tyrosine of the enzyme, resulting in the formation of a DNA-(5'-phosphotyrosyl)-enzyme intermediate and the expulsion of a 3'-OH DNA strand. The free DNA strand then undergoes passage around the unbroken strand, thus removing DNA supercoils. Finally, in the religation step, the DNA 3'-OH attacks the covalent intermediate to expel the active-site tyrosine and restore the DNA phosphodiester backbone. The protein is DNA topoisomerase 1 of Pasteurella multocida (strain Pm70).